The sequence spans 116 residues: MRVLILLCLFTAFPGILSDVQLQESGPDLVKPSQSLSLTCTVTGYSITSGYSWHWIRQFPGNKLEWMGYIHYSGNTSYNPSLKSRISITRDTSKNQFFLQLNSVTTEDTATYYCAR.

Positions Met-1–Ser-18 are cleaved as a signal peptide. Residues Asp-19–Thr-48 are framework-1. Cys-40 and Cys-114 are disulfide-bonded. A complementarity-determining-1 region spans residues Ser-49 to Trp-53. The segment at His-54–Met-67 is framework-2. Positions Gly-68–Ser-84 are complementarity-determining-2. The interval Arg-85–Arg-116 is framework-3.

The sequence is that of Ig heavy chain V region 1B43 from Mus musculus (Mouse).